Here is a 346-residue protein sequence, read N- to C-terminus: GTPase Obg (346 aa).

The Obg domain maps to 1–158 (MKFLDQVKIY…RAIWLRLKLI (158 aa)). The OBG-type G domain occupies 159 to 327 (ADVGLVGLPN…LLREAFALVR (169 aa)). GTP-binding positions include 165-172 (GLPNAGKS), 190-194 (FTTLA), 212-215 (DIPG), 279-282 (NKID), and 308-310 (SGF). Mg(2+) contacts are provided by Ser-172 and Thr-192.

This sequence belongs to the TRAFAC class OBG-HflX-like GTPase superfamily. OBG GTPase family. Monomer. Requires Mg(2+) as cofactor.

The protein resides in the cytoplasm. In terms of biological role, an essential GTPase which binds GTP, GDP and possibly (p)ppGpp with moderate affinity, with high nucleotide exchange rates and a fairly low GTP hydrolysis rate. Plays a role in control of the cell cycle, stress response, ribosome biogenesis and in those bacteria that undergo differentiation, in morphogenesis control. The sequence is that of GTPase Obg from Phenylobacterium zucineum (strain HLK1).